Here is a 417-residue protein sequence, read N- to C-terminus: Glutamyl-tRNA(Gln) amidotransferase subunit D (417 aa).

Residues 73-400 (EKVWLLATGG…EEVPRVLTTP (328 aa)) form the Asparaginase/glutaminase domain. Catalysis depends on residues threonine 83, threonine 157, aspartate 158, and lysine 236.

It belongs to the asparaginase 1 family. GatD subfamily. As to quaternary structure, heterodimer of GatD and GatE.

It carries out the reaction L-glutamyl-tRNA(Gln) + L-glutamine + ATP + H2O = L-glutaminyl-tRNA(Gln) + L-glutamate + ADP + phosphate + H(+). Functionally, allows the formation of correctly charged Gln-tRNA(Gln) through the transamidation of misacylated Glu-tRNA(Gln) in organisms which lack glutaminyl-tRNA synthetase. The reaction takes place in the presence of glutamine and ATP through an activated gamma-phospho-Glu-tRNA(Gln). The GatDE system is specific for glutamate and does not act on aspartate. This is Glutamyl-tRNA(Gln) amidotransferase subunit D from Pyrobaculum aerophilum (strain ATCC 51768 / DSM 7523 / JCM 9630 / CIP 104966 / NBRC 100827 / IM2).